A 131-amino-acid chain; its full sequence is Large ribosomal subunit protein bL19 (131 aa).

Belongs to the bacterial ribosomal protein bL19 family.

In terms of biological role, this protein is located at the 30S-50S ribosomal subunit interface and may play a role in the structure and function of the aminoacyl-tRNA binding site. The chain is Large ribosomal subunit protein bL19 from Polynucleobacter necessarius subsp. necessarius (strain STIR1).